The chain runs to 315 residues: Homoserine kinase (315 aa).

97–107 (PPARGLGSSAT) lines the ATP pocket.

It belongs to the GHMP kinase family. Homoserine kinase subfamily.

It is found in the cytoplasm. It catalyses the reaction L-homoserine + ATP = O-phospho-L-homoserine + ADP + H(+). Its pathway is amino-acid biosynthesis; L-threonine biosynthesis; L-threonine from L-aspartate: step 4/5. Its function is as follows. Catalyzes the ATP-dependent phosphorylation of L-homoserine to L-homoserine phosphate. The polypeptide is Homoserine kinase (Parasynechococcus marenigrum (strain WH8102)).